Consider the following 719-residue polypeptide: DNA ligase (719 aa).

Residues 42 to 46, 91 to 92, and Glu-125 each bind NAD(+); these read DAEYD and SL. The N6-AMP-lysine intermediate role is filled by Lys-127. Residues Arg-148, Glu-184, Lys-300, and Lys-324 each contribute to the NAD(+) site. The Zn(2+) site is built by Cys-429, Cys-432, Cys-447, and Cys-453. The BRCT domain occupies 638–719; sequence TASSPIAGKT…WLQLIEGSYI (82 aa).

The protein belongs to the NAD-dependent DNA ligase family. LigA subfamily. The cofactor is Mg(2+). Mn(2+) serves as cofactor.

The enzyme catalyses NAD(+) + (deoxyribonucleotide)n-3'-hydroxyl + 5'-phospho-(deoxyribonucleotide)m = (deoxyribonucleotide)n+m + AMP + beta-nicotinamide D-nucleotide.. In terms of biological role, DNA ligase that catalyzes the formation of phosphodiester linkages between 5'-phosphoryl and 3'-hydroxyl groups in double-stranded DNA using NAD as a coenzyme and as the energy source for the reaction. It is essential for DNA replication and repair of damaged DNA. This Bartonella quintana (strain Toulouse) (Rochalimaea quintana) protein is DNA ligase.